The sequence spans 469 residues: Citrate synthase, mitochondrial (469 aa).

Residues Met1–Ser30 constitute a mitochondrion transit peptide. Residues His304 and His350 contribute to the active site. An oxaloacetate-binding site is contributed by Arg359. The active site involves Asp405. Residues Arg431 and Arg451 each contribute to the oxaloacetate site.

Belongs to the citrate synthase family. In terms of assembly, homodimer.

It localises to the mitochondrion matrix. The catalysed reaction is oxaloacetate + acetyl-CoA + H2O = citrate + CoA + H(+). The protein operates within carbohydrate metabolism; tricarboxylic acid cycle; isocitrate from oxaloacetate: step 1/2. Its function is as follows. Key enzyme of the Krebs tricarboxylic acid cycle which catalyzes the synthesis of citrate from acetyl coenzyme A and oxaloacetate. This Xiphias gladius (Swordfish) protein is Citrate synthase, mitochondrial (cs).